A 138-amino-acid polypeptide reads, in one-letter code: rRNA methyltransferase 1, mitochondrial (138 aa).

The N-terminal 21 residues, 1-21 (MNNQPCSIVWRRFLTSKVKPA), are a transit peptide targeting the mitochondrion. Positions 92 to 113 (KQDILSSKRQQEEHKSKYSRKS) are disordered.

The protein belongs to the class IV-like SAM-binding methyltransferase superfamily. RNA methyltransferase TrmH family.

The protein localises to the mitochondrion. The catalysed reaction is a guanosine in 21S rRNA + S-adenosyl-L-methionine = a 2'-O-methylguanosine in 21S rRNA + S-adenosyl-L-homocysteine + H(+). Its function is as follows. S-adenosyl-L-methionine-dependent 2'-O-ribose methyltransferase that catalyzes the formation of the 2'-O-methylguanosine corresponding to position 2270 in S.cerevisiae 21S mitochondrial large ribosomal RNA, a universally conserved modification in the peptidyl transferase domain of the 21S rRNA. This chain is rRNA methyltransferase 1, mitochondrial, found in Lachancea kluyveri (strain ATCC 58438 / CBS 3082 / BCRC 21498 / NBRC 1685 / JCM 7257 / NCYC 543 / NRRL Y-12651) (Yeast).